The primary structure comprises 506 residues: Maturase K (506 aa).

This sequence belongs to the intron maturase 2 family. MatK subfamily.

It localises to the plastid. Its subcellular location is the chloroplast. Its function is as follows. Usually encoded in the trnK tRNA gene intron. Probably assists in splicing its own and other chloroplast group II introns. The sequence is that of Maturase K from Atractylodes lancea (Atractylodes japonica).